The chain runs to 461 residues: V-type ATP synthase beta chain (461 aa).

The protein belongs to the ATPase alpha/beta chains family.

Functionally, produces ATP from ADP in the presence of a proton gradient across the membrane. The V-type beta chain is a regulatory subunit. This Streptococcus pneumoniae (strain CGSP14) protein is V-type ATP synthase beta chain.